We begin with the raw amino-acid sequence, 1131 residues long: Homeobox-DDT domain protein RLT3 (1131 aa).

Positions 2–56 (KRKSPLQVQALEGFYLEQMYPTPKEMEDLGKSLGLTLKEVRGWFKRRRSRGKGVK) form a DNA-binding region, homeobox; TALE-type. The span at 239–251 (LQKRSTEKKRRSI) shows a compositional bias: basic residues. Residues 239 to 264 (LQKRSTEKKRRSIHREAELNKDETQR) are disordered. Residues 252 to 264 (HREAELNKDETQR) show a composition bias toward basic and acidic residues. The DDT domain maps to 365–424 (PESVKKLFKVVHFLYTYSVTLDIGPFTLDEFTRAFHDKDSLLLGKIHLSLLKLLLLDVET). Positions 579–609 (EDPDKSQSDSDDSGSVDDESDDCSISSGDEI) are disordered. The segment covering 587–600 (DSDDSGSVDDESDD) has biased composition (acidic residues).

The protein resides in the nucleus. Functionally, transcriptional regulator required for the maintenance of the plant vegetative phase. May prevent the early activation of the vegetative-to-reproductive transition by regulating key genes that contribute to flower timing. The protein is Homeobox-DDT domain protein RLT3 of Arabidopsis thaliana (Mouse-ear cress).